The chain runs to 234 residues: Putative gustatory receptor clone PTE38 (234 aa).

The chain crosses the membrane as a helical span at residues 1 to 11; that stretch reads MYLFFSNLSFN. The Extracellular portion of the chain corresponds to 12-42; it reads DICIITTTIPKMLMNVQSHDQSITYLGCLSQ. A disulfide bridge connects residues C39 and C121. Residues 43-62 form a helical membrane-spanning segment; that stretch reads VYLIVNFGSIESCLLAVMAY. Residues 63 to 84 lie on the Cytoplasmic side of the membrane; that stretch reads DRYVAICHPLKYTVIMNHYFCV. Residues 85-105 traverse the membrane as a helical segment; it reads MLLLFACSLALHMCLFHILMV. Topologically, residues 106-138 are extracellular; the sequence is LILTFCTKTEIPHFFCELAHIIKLTCSDNFINY. A helical membrane pass occupies residues 139–160; that stretch reads LLIYTVSVLFFGVHIVGIILSY. At 161–182 the chain is on the cytoplasmic side; sequence IYTVSSVLRMSLLGGMYKAFST. Residues 183-202 traverse the membrane as a helical segment; it reads CGSHLSVVSLFYGTGFGVHI. Residues 203–212 lie on the Extracellular side of the membrane; that stretch reads SSPLTDSPRK. A helical transmembrane segment spans residues 213 to 234; it reads TVVASVMYTVVTQMHGPFIYSL.

Belongs to the G-protein coupled receptor 1 family. In terms of tissue distribution, tongue specific.

The protein localises to the cell membrane. In terms of biological role, possible taste receptor. The chain is Putative gustatory receptor clone PTE38 from Rattus norvegicus (Rat).